The sequence spans 315 residues: Glycine--tRNA ligase alpha subunit (315 aa).

This sequence belongs to the class-II aminoacyl-tRNA synthetase family. In terms of assembly, tetramer of two alpha and two beta subunits.

It is found in the cytoplasm. It catalyses the reaction tRNA(Gly) + glycine + ATP = glycyl-tRNA(Gly) + AMP + diphosphate. The polypeptide is Glycine--tRNA ligase alpha subunit (Pseudomonas entomophila (strain L48)).